A 1687-amino-acid chain; its full sequence is A-kinase anchor protein SPHKAP (1687 aa).

Residues 1-14 (MDVNSRLSVQSNVE) show a composition bias toward polar residues. Disordered regions lie at residues 1 to 25 (MDVN…PEPQ) and 272 to 293 (RKHR…ENTS). Residues 914 to 931 (FAEELAETVVSMATEIAA) are PKA-RII subunit binding domain. A disordered region spans residues 964–989 (LKRKKENSSAGSTVRKHKPPRLSEIK). A phosphoserine mark is found at Ser-1010, Ser-1070, Ser-1092, Ser-1105, Ser-1106, Ser-1109, Ser-1244, and Ser-1273. 2 disordered regions span residues 1363–1406 (VTEG…SPRR) and 1421–1520 (DQKE…PDDT). Residues 1366-1375 (GNHSPVSSPG) are compositionally biased toward polar residues. Residues 1382 to 1393 (KPSDFDPRRETS) are compositionally biased toward basic and acidic residues. A compositionally biased stretch (polar residues) spans 1461-1470 (TAPSTCQSSR). Over residues 1482 to 1494 (EVLKEDIPRDESR) the composition is skewed to basic and acidic residues. Residues 1495–1508 (NPPSSSEESTGSWS) are compositionally biased toward low complexity.

It belongs to the AKAP110 family. As to quaternary structure, interacts (via the PKA-RII subunit binding domain) with the RI subunit of PKA. Interacts with SPHK1; the interaction greatly reduces SPHK1 activity.

The protein resides in the cytoplasm. Functionally, anchoring protein that binds preferentially to the type I regulatory subunit of c-AMP-dependent protein kinase (PKA type I) and targets it to distinct subcellular compartments. May act as a converging factor linking cAMP and sphingosine signaling pathways. Plays a regulatory role in the modulation of SPHK1. This Mus musculus (Mouse) protein is A-kinase anchor protein SPHKAP (Sphkap).